Consider the following 449-residue polypeptide: MFS-type transporter 1 (449 aa).

Basic and acidic residues predominate over residues 1–37 (MTHSSSNEHEKEDDRRASDDMMDRDDQNAKEEQDVSK). A disordered region spans residues 1-43 (MTHSSSNEHEKEDDRRASDDMMDRDDQNAKEEQDVSKDAPPVN). The next 6 membrane-spanning stretches (helical) occupy residues 61 to 81 (VAGG…IGIF), 97 to 117 (TISW…LVVG), 127 to 147 (YILL…SLST), 152 to 172 (ILLS…TPAV), 185 to 205 (LANG…PIMF), and 212 to 232 (VGFP…LIIA). N-linked (GlcNAc...) asparagine glycosylation occurs at Asn233. Helical transmembrane passes span 262–282 (LLTT…INYI), 298–318 (YLIP…GFVA), 326–346 (VHTF…LPAA), 349–369 (APII…VAIL), 390–410 (FGVL…FVAH), and 420–440 (IWTG…RISL).

This sequence belongs to the major facilitator superfamily. Monocarboxylate porter (TC 2.A.1.13) family.

The protein resides in the cell membrane. The enzyme catalyses erythrostominone(in) = erythrostominone(out). The catalysed reaction is deoxyerythrostominone(in) = deoxyerythrostominone(out). It carries out the reaction epierythrostominol(in) = epierythrostominol(out). It catalyses the reaction deoxyerythrostominol(in) = deoxyerythrostominol(out). Functionally, MFS-type transporter that mediates the secretion of the 4 major naphthoquinone derivatives produced, erythrostominone (NQ1), deoxyerythrostominone (NQ2), epierythrostominol (NQ4), and deoxyerythrostominol (NQ5), as well as of 3 newly identified naphthoquinone derivatives termed NQ7, NQ8 and NQ9. The polypeptide is MFS-type transporter 1 (Ophiocordyceps sp. (strain BCC 1869) (Entomopathogenic fungus)).